A 264-amino-acid chain; its full sequence is ATP synthase subunit a (264 aa).

6 consecutive transmembrane segments (helical) span residues 29–49 (TWHI…LWLF), 90–110 (IAPL…MDMI), 134–154 (DLNI…YYSI), 177–197 (IPVN…SLAL), 208–228 (LIFI…ALGV), and 235–255 (LIFH…LTIV).

The protein belongs to the ATPase A chain family. As to quaternary structure, F-type ATPases have 2 components, CF(1) - the catalytic core - and CF(0) - the membrane proton channel. CF(1) has five subunits: alpha(3), beta(3), gamma(1), delta(1), epsilon(1). CF(0) has three main subunits: a(1), b(2) and c(9-12). The alpha and beta chains form an alternating ring which encloses part of the gamma chain. CF(1) is attached to CF(0) by a central stalk formed by the gamma and epsilon chains, while a peripheral stalk is formed by the delta and b chains.

Its subcellular location is the cell inner membrane. In terms of biological role, key component of the proton channel; it plays a direct role in the translocation of protons across the membrane. The sequence is that of ATP synthase subunit a from Shewanella loihica (strain ATCC BAA-1088 / PV-4).